The chain runs to 211 residues: Uracil phosphoribosyltransferase (211 aa).

Residues arginine 77, arginine 102, and aspartate 129–serine 137 each bind 5-phospho-alpha-D-ribose 1-diphosphate. Uracil contacts are provided by residues isoleucine 192 and glycine 197 to alanine 199. Aspartate 198 contributes to the 5-phospho-alpha-D-ribose 1-diphosphate binding site.

This sequence belongs to the UPRTase family. It depends on Mg(2+) as a cofactor.

The enzyme catalyses UMP + diphosphate = 5-phospho-alpha-D-ribose 1-diphosphate + uracil. It functions in the pathway pyrimidine metabolism; UMP biosynthesis via salvage pathway; UMP from uracil: step 1/1. Allosterically activated by GTP. Catalyzes the conversion of uracil and 5-phospho-alpha-D-ribose 1-diphosphate (PRPP) to UMP and diphosphate. The protein is Uracil phosphoribosyltransferase of Corynebacterium efficiens (strain DSM 44549 / YS-314 / AJ 12310 / JCM 11189 / NBRC 100395).